We begin with the raw amino-acid sequence, 620 residues long: Chaperone protein HscA homolog (620 aa).

Belongs to the heat shock protein 70 family.

Chaperone involved in the maturation of iron-sulfur cluster-containing proteins. Has a low intrinsic ATPase activity which is markedly stimulated by HscB. The chain is Chaperone protein HscA homolog from Neisseria meningitidis serogroup A / serotype 4A (strain DSM 15465 / Z2491).